The chain runs to 43 residues: uncharacterized protein (43 aa).

Polar residues-rich tracts occupy residues 1-19 and 33-43; these read MSQK…SGAS and PENSISKTFSK. Positions 1–43 are disordered; that stretch reads MSQKLSFFQQNTRNGSGASRTLVIKPPTIQPKPENSISKTFSK.

This is an uncharacterized protein from Dictyostelium discoideum (Social amoeba).